The chain runs to 1607 residues: MSYEEDDWFSYRTEFNKRADSPRAAGNYDFESGNIDNIPLNDDGPLSPSQDFDLAGTLEEYESYDLRLSPNGGLNREDQQPGPSGNNDGQYHVMQNNDSFAQHMQSSNTIEYNSFEMPTVINSNHDVGPYQDLGIDDPNSFYANQQPSTSQGNDMIINENYEMMGPSTSYMPQIDHMNPSGNSSSQINHQQGMIVPQVQQQPAKPKTTKKRPPPKKKTAAQAPDTVGTVLTKVNKLTQQIDNNNDNQEQKIETRISAEDLVRVSALLSRLDVYQKEQAQGNNTHDQDIEALQAEIAQVFTKNMAMSANDAPGNSILSQIQNLTSIGSSASSSAQPSQPAKKAAPKRKTVPNTAKNLAQNQQIMPPQAQITPTKLVMDPPTTTMVPSSSQSNHMYSNDGFTTYNQMDEPGTSQQQQYNDYRQPPSQESMQYGHQQIIQARVVPSMNQKTHNYRQAVVFASPNTNGPSSQLQRPQSGMDQMQDQQYHAQDLQGSQVQQTFVSVQHDGQIYQEVEPTLRDFVRQGRYQGPQDAPHLRQQLITNVNATTNKQMVHRSQDPTPSPGNLQQFGEPLQRHGSYPHSHDMRPNSHSQSQHSYSNHYDGATEFFDVSMQHQDSQMSQIQPGSQHYVQQQELYHPIGDQQQMVEPESEYPVPQVTNELSEEELRAIMEEKRQIRQKRLKDIMIDQLNRLEEPVDVTPFRNKMDVLERLLPYHHFANEEEPVSDFDSTFQRVMDNAVHQANSIGNRIRNIVLRDTMRSSTEWEENMILFLETESERRKLEDDKKLADQDLSTFLRNSDIIQNVRARRLDVERTRLRVPRIPAHLKELDLQNGQLSSLYREYEFDSYDENRPRGSPFVYEEPESESESEPEAEPEPKKDNFAEPEPARGDISPLIGFPQLSPIPSPSRYRNESESTFDWKDEDESPLLSPETEKINKAADQFRKEIFGTQEDLDKSEPFPFEQISEAARNQHLITAQPQLPRVDASSIGSLASSSSTVDHSPQSIHPVFSPKAAIQSSSVQVMKPPRSPSSVSCKLSTPCVEQSLPEESHYEGSPEIDEDYDMSPIRENEPAELISLPISVNMIKKEKEDSTPKLKLRIPAAVLQNGIVASEDESDVAVEETIPAIRKPLKLRFNLKDIKLEEPSPDRDVASSRPKSRTEPPPTPEKLHVKIKASPAETTPTKLQLKEKSPAKTPVFKTPLQTPIKMTPSPSESRKRRSAKIEDSPAQKKKLLNSGSSFVTPKNGLRAELDETVERPLRIMTDGRKIVMKISKVSRNINHFVTPRRDKKGNLHKDLSPTNYTRLTMKLMKKKGELSVEFTETPNKNSEEDDHKIPNIPSTSTSIPPASTVVSSVSVKGRPAPASRKSSIDTAGKDKKGQLAKNKAAFCNRFNPFANVPSSKPSTSSAVSATPSTSSAVSAKLPTGKTPGRPVALSTPRSSHKPPQAVVAPRPNLIRTAPVVPKITVTNASESSLPSKSHIPIEVKPKLSSLLPWVSDTDESPEQKHKLKKTMPSINLLKVKTEPPEADAVTSKPESPRASSSMSFFEDAFLRSPKRSNEPLPVVEFSDDEENDLAHSTFSHATDHLLGTSNMNSSTNGSSSGLPWSTDP.

12 disordered regions span residues 14–52 (EFNK…SQDF), 67–93 (RLSP…QYHV), 167–222 (STSY…AAQA), 326–425 (GSSA…PPSQ), 459–478 (SPNT…GMDQ), 549–594 (MVHR…QHSY), 845–931 (YDEN…PETE), 1017–1061 (SVQV…DYDM), 1141–1241 (EPSP…VTPK), 1319–1378 (ETPN…KGQL), 1392–1445 (FANV…PQAV), and 1517–1607 (KVKT…STDP). Polar residues-rich tracts occupy residues 81–93 (PGPS…QYHV) and 179–191 (PSGN…NHQQ). The span at 195–205 (VPQVQQQPAKP) shows a compositional bias: low complexity. Basic residues predominate over residues 206 to 218 (KTTKKRPPPKKKT). The segment covering 327–341 (SSASSSAQPSQPAKK) has biased composition (low complexity). Composition is skewed to polar residues over residues 349 to 371 (VPNT…QITP) and 379 to 425 (PTTT…PPSQ). Low complexity predominate over residues 585-594 (NSHSQSQHSY). The span at 858 to 871 (EEPESESESEPEAE) shows a compositional bias: acidic residues. Composition is skewed to basic and acidic residues over residues 872–886 (PEPK…EPAR) and 907–917 (YRNESESTFDW). 3 stretches are compositionally biased toward low complexity: residues 1333–1354 (PNIP…SVSV), 1395–1419 (VPSS…VSAK), and 1584–1601 (LLGT…SSGL).

As to expression, expressed in gonad distal tip cells and gonad sheath cells.

The protein localises to the nucleus. Its subcellular location is the cytoplasm. Its function is as follows. During gonad development, involved in distal tip cell (DTC) migration from the dorsal side of the hermaphrodite body to the midbody which allows for the formation of gonad arms. Role in gonad DTC migration may be in association with integrin related proteins ina-1 and mig-15. This Caenorhabditis elegans protein is Abnormal cell migration protein 38.